The primary structure comprises 385 residues: Cellulase CelDZ1 (385 aa).

A helical membrane pass occupies residues 6–26; sequence INKWYFFVGMLVIFAVIISLI. Substrate-binding positions include His87, 91 to 92, Tyr118, and His153; that span reads WF. The active-site Proton donor is the Glu192. Tyr261 is a substrate binding site. Catalysis depends on Glu294, which acts as the Nucleophile. Substrate contacts are provided by residues 300–301, Trp328, and 333–335; these read AS and KNE.

The protein belongs to the glycosyl hydrolase 5 (cellulase A) family. As to quaternary structure, monomer.

It is found in the cell membrane. It catalyses the reaction Endohydrolysis of (1-&gt;4)-beta-D-glucosidic linkages in cellulose, lichenin and cereal beta-D-glucans.. Its activity is regulated as follows. Activity is enhanced by 1mM Mn(2+), but is not affected by 1mM Ca(2+), Mg(2+), Zn(2+), K(+), Na(+) or Li(+). Activity is not inhibited by EDTA (in vitro). In terms of biological role, thermostable endoglucanase that has high activity with soluble polymeric substrates containing beta-1,4-glycosidic bonds, such as carboxymethyl cellulose (CMC) and barley beta-D-glucan (in vitro). Has no activity with cellobiose and filter paper. Has no activity with substrates containing beta-1,3-linked glycans, such as laminarin. Likewise, lacks activity with xylan, galactomannan and pectin. This Thermoanaerobacterium sp protein is Cellulase CelDZ1.